The sequence spans 709 residues: Polyribonucleotide nucleotidyltransferase (709 aa).

Mg(2+)-binding residues include aspartate 485 and aspartate 491. Residues 552–611 form the KH domain; the sequence is PRIYTMKIDPKKIKDVIGKGGATIRSLTEETGTSIDIDDDGTVKIAAVDSNAAKNVMGRI. An S1 motif domain is found at 621-689; it reads GAIYKGKVTR…RQGRIRLTMK (69 aa).

The protein belongs to the polyribonucleotide nucleotidyltransferase family. In terms of assembly, component of the RNA degradosome, which is a multiprotein complex involved in RNA processing and mRNA degradation. It depends on Mg(2+) as a cofactor.

It localises to the cytoplasm. It carries out the reaction RNA(n+1) + phosphate = RNA(n) + a ribonucleoside 5'-diphosphate. Functionally, involved in mRNA degradation. Catalyzes the phosphorolysis of single-stranded polyribonucleotides processively in the 3'- to 5'-direction. This Haemophilus influenzae (strain 86-028NP) protein is Polyribonucleotide nucleotidyltransferase.